Consider the following 94-residue polypeptide: MLRLDLQFFASKKGVGSTKNGRDSESKRLGAKRADGQFVTGGSILYRQRGTKIYPGENVGRGGDDTLFAKIDGTVKFERFGRDRKKVSVYPAAQ.

The propeptide occupies 1–9; that stretch reads MLRLDLQFF.

It belongs to the bacterial ribosomal protein bL27 family. In terms of processing, the N-terminus is cleaved by ribosomal processing cysteine protease Prp.

This is Large ribosomal subunit protein bL27 from Bacillus pumilus (strain SAFR-032).